A 291-amino-acid polypeptide reads, in one-letter code: 4-diphosphocytidyl-2-C-methyl-D-erythritol kinase (291 aa).

Lys11 is an active-site residue. An ATP-binding site is contributed by 95–105 (PVAAGMAGGSS). Asp137 is a catalytic residue.

This sequence belongs to the GHMP kinase family. IspE subfamily.

It catalyses the reaction 4-CDP-2-C-methyl-D-erythritol + ATP = 4-CDP-2-C-methyl-D-erythritol 2-phosphate + ADP + H(+). It functions in the pathway isoprenoid biosynthesis; isopentenyl diphosphate biosynthesis via DXP pathway; isopentenyl diphosphate from 1-deoxy-D-xylulose 5-phosphate: step 3/6. In terms of biological role, catalyzes the phosphorylation of the position 2 hydroxy group of 4-diphosphocytidyl-2C-methyl-D-erythritol. This Lachnoclostridium phytofermentans (strain ATCC 700394 / DSM 18823 / ISDg) (Clostridium phytofermentans) protein is 4-diphosphocytidyl-2-C-methyl-D-erythritol kinase.